A 905-amino-acid chain; its full sequence is Methionine--tRNA ligase, cytoplasmic (905 aa).

In terms of domain architecture, GST N-terminal spans 1–75 (MKLFVGEGNP…YFYLSSGHDM (75 aa)). Residues 72–199 (GHDMCDLSNQ…DKGSSVFKPF (128 aa)) form the GST C-terminal domain. The 'HIGH' region signature appears at 271–281 (PYVNNVPHLGN). Residues 591 to 595 (KFSKS) carry the 'KMSKS' region motif. K594 is an ATP binding site. 2 disordered regions span residues 813–874 (RFGG…VIDP) and 886–905 (LALAEGKSPDPPTQKGKKKK). Residues 841-874 (GPERVKELMQELEKQGNHVRELKGKKAEKSVIDP) show a composition bias toward basic and acidic residues. Positions 844–900 (RVKELMQELEKQGNHVRELKGKKAEKSVIDPEVQKLLALKKELALAEGKSPDPPTQK) constitute a WHEP-TRS domain.

Belongs to the class-I aminoacyl-tRNA synthetase family. As to quaternary structure, monomer. Part of a multisubunit complex that groups tRNA ligases for Arg (RARS1), Asp (DARS1), Gln (QARS1), Ile (IARS1), Leu (LARS1), Lys (KARS1), Met (MARS1) the bifunctional ligase for Glu and Pro (EPRS1) and the auxiliary subunits AIMP1/p43, AIMP2/p38 and EEF1E1/p18.

Its subcellular location is the cytoplasm. It is found in the cytosol. The protein localises to the nucleus. It localises to the nucleolus. It carries out the reaction tRNA(Met) + L-methionine + ATP = L-methionyl-tRNA(Met) + AMP + diphosphate. Its function is as follows. Catalyzes the specific attachment of an amino acid to its cognate tRNA in a 2 step reaction: the amino acid (AA) is first activated by ATP to form AA-AMP and then transferred to the acceptor end of the tRNA. Plays a role in the synthesis of ribosomal RNA in the nucleolus. In Xenopus laevis (African clawed frog), this protein is Methionine--tRNA ligase, cytoplasmic (mars1).